The sequence spans 252 residues: MAGHSKWANIKRQKAVVDAKKGKTFTQLSRAIIVAARSGVPDPALNFQLRTAIDKAKAASIPNDNIERAIAKGAGTFGGDNAIFEAIRYEGYGPGGVAILIEAFTDNRNRTAADLRVAFSKNGGNLGETGCVSWMFDQKGVCVVQGVIDEEQLLEASLEGGAESYEMTEDEMAEVFTDIGNLEALSQTLKNQGFKVTDAEFRWIPSNSVEVTDPDQARSLFKLIDTLEGLDDVQNVTANFDITEELMALSIS.

The protein belongs to the TACO1 family.

It is found in the cytoplasm. In Nostoc punctiforme (strain ATCC 29133 / PCC 73102), this protein is Probable transcriptional regulatory protein Npun_R5651.